The chain runs to 169 residues: Cell division inhibitor SulA (169 aa).

Residues 1-13 (MFTSAHANRSAQA) show a composition bias toward polar residues. The tract at residues 1–26 (MFTSAHANRSAQASAPAGHYAHRSGE) is disordered. Positions 106–112 (ALRTGNY) are ftsZ binding. The interval 162-169 (KIHSNLYH) is lon protease binding.

Belongs to the SulA family. In terms of assembly, interacts with FtsZ. Post-translationally, is rapidly cleaved and degraded by the Lon protease once DNA damage is repaired.

Its function is as follows. Component of the SOS system and an inhibitor of cell division. Accumulation of SulA causes rapid cessation of cell division and the appearance of long, non-septate filaments. In the presence of GTP, binds a polymerization-competent form of FtsZ in a 1:1 ratio, thus inhibiting FtsZ polymerization and therefore preventing it from participating in the assembly of the Z ring. This mechanism prevents the premature segregation of damaged DNA to daughter cells during cell division. The polypeptide is Cell division inhibitor SulA (Klebsiella pneumoniae subsp. pneumoniae (strain ATCC 700721 / MGH 78578)).